Reading from the N-terminus, the 229-residue chain is Non-structural protein P8 (229 aa).

Over residues 13-31 the composition is skewed to basic and acidic residues; sequence KMKHNQDRVEEPSQVRVDD. A disordered region spans residues 13-46; that stretch reads KMKHNQDRVEEPSQVRVDDTISQPPRYAPSAPMP. Residues 36-46 show a composition bias toward low complexity; sequence PPRYAPSAPMP. Transmembrane regions (helical) follow at residues 119–139 and 162–182; these read IIHT…VCTL and SLNP…MVCA.

Belongs to the orbivirus NS3 family. As to quaternary structure, forms homooligomers via coiled-coil motif. Interacts with host OPTN; this interaction inhibits innate immune response.

It localises to the host cell membrane. Its subcellular location is the host Golgi apparatus. Its function is as follows. Plays a role in the inhibition of host innate immune response. Interacts with host OPTN and thus inhibits the recruitment of TBK1 to the host Golgi apparatus. In turn, downstream partner IRF3 cannot be activated and IFN-beta production is impaired. Functionally, facilitates viral particle release either by increasing plasma membrane permeability through a viroporin-like activity or by viral budding. The protein is Non-structural protein P8 (Segment-10) of Antilocapra americana (Pronghorn).